The chain runs to 107 residues: DNA polymerase delta subunit 4 (107 aa).

The PCNA-interaction protein motif (PIP box) motif lies at 1–16; sequence MGRKRLITDSYPVVKR. The interval 1–44 is disordered; the sequence is MGRKRLITDSYPVVKRREGPAGHSKGELAPELGEEPQPRDEEEA. Residues 15–28 are compositionally biased toward basic and acidic residues; that stretch reads KRREGPAGHSKGEL.

Belongs to the DNA polymerase delta subunit 4 family. Component of the tetrameric DNA polymerase delta complex (Pol-delta4), which consists of POLD1/p125, POLD2/p50, POLD3/p66/p68 and POLD4/p12, with POLD1 bearing DNA polymerase and 3' to 5' proofreading exonuclease activities. Within this complex, directly interacts with POLD1 and POLD2. Directly interacts with PCNA, as do POLD1 and POLD3; this interaction stimulates Pol-delta4 polymerase activity. As POLD1 and POLD2, directly interacts with WRNIP1; this interaction stimulates DNA polymerase delta-mediated DNA synthesis, independently of the presence of PCNA. This stimulation may be due predominantly to an increase of initiation frequency and also to increased processivity. Upon genotoxic stress induced by DNA damaging agents or by replication stress, POLD4 is proteolytically degraded and Pol-delta4 is converted into a trimeric form of the complex (Pol-delta3) which has an increased proofreading activity. The DNA polymerase delta complex interacts with POLDIP2; this interaction is probably mediated through direct binding to POLD2. In terms of processing, ubiquitinated; undergoes 'Lys-48'-linked ubiquitination in response to UV irradiation, leading to proteasomal degradation. This modification is partly mediated by RNF8 and by the DCX(DTL) E3 ubiquitin ligase complex (also called CRL4(CDT2)). Efficient degradation requires the presence of PCNA and is required for the inhibition of fork progression after DNA damage.

Its subcellular location is the nucleus. Functionally, as a component of the tetrameric DNA polymerase delta complex (Pol-delta4), plays a role in high fidelity genome replication and repair. Within this complex, increases the rate of DNA synthesis and decreases fidelity by regulating POLD1 polymerase and proofreading 3' to 5' exonuclease activity. Pol-delta4 participates in Okazaki fragment processing, through both the short flap pathway, as well as a nick translation system. Under conditions of DNA replication stress, required for the repair of broken replication forks through break-induced replication (BIR), a mechanism that may induce segmental genomic duplications of up to 200 kb. Involved in Pol-delta4 translesion synthesis (TLS) of templates carrying O6-methylguanine or abasic sites. Its degradation in response to DNA damage is required for the inhibition of fork progression and cell survival. The protein is DNA polymerase delta subunit 4 (POLD4) of Homo sapiens (Human).